Consider the following 648-residue polypeptide: 5-aminolevulinate synthase, mitochondrial (648 aa).

The N-terminal 26 residues, 1-26, are a transit peptide targeting the mitochondrion; sequence MEALLQQSRAMCPFLKRSSPNTLRSL. The interval 69 to 109 is disordered; it reads KRFTSSAAGVPGAGAGTPKPTRGSPGKRALHSTGGNGANMS. Residues R170, S283, and K302 each contribute to the substrate site. S335, H363, and T409 together coordinate pyridoxal 5'-phosphate. The active site involves K412. At K412 the chain carries N6-(pyridoxal phosphate)lysine. Pyridoxal 5'-phosphate contacts are provided by T441 and T442. T527 serves as a coordination point for substrate.

Belongs to the class-II pyridoxal-phosphate-dependent aminotransferase family. In terms of assembly, homodimer. The cofactor is pyridoxal 5'-phosphate.

The protein resides in the mitochondrion matrix. It catalyses the reaction succinyl-CoA + glycine + H(+) = 5-aminolevulinate + CO2 + CoA. Its pathway is porphyrin-containing compound metabolism; protoporphyrin-IX biosynthesis; 5-aminolevulinate from glycine: step 1/1. In terms of biological role, catalyzes the synthesis of 5-aminolevulinate (ALA) from succinyl-CoA and glycine, the first and rate-limiting step in heme biosynthesis. In Emericella nidulans (strain FGSC A4 / ATCC 38163 / CBS 112.46 / NRRL 194 / M139) (Aspergillus nidulans), this protein is 5-aminolevulinate synthase, mitochondrial (hemA).